The chain runs to 336 residues: Carbamoyl dehydratase HypE (336 aa).

Cys336 carries the post-translational modification S-carbamoylcysteine; by HypF; alternate. Cys336 carries the post-translational modification S-cyanocysteine; by autocatalysis; alternate.

It belongs to the HypE family. In terms of assembly, homodimer. Forms a complex with HypF. Also forms a complex with HypC, or HybG, and HypD. Post-translationally, modified by HypF, which adds a carboxamido group to the thiolate of the C-terminal cysteine, yielding a protein-S-carboxamide. The carboxamido group is then dehydrated by HypE itself to yield a protein-thiocyanate.

It catalyses the reaction C-terminal S-carboxamide-L-cysteinyl-[HypE protein] + ATP = C-terminal S-cyanate-L-cysteinyl-[HypE protein] + ADP + phosphate + H(+). The protein operates within protein modification; [NiFe] hydrogenase maturation. Functionally, involved in the maturation of [NiFe] hydrogenases. Along with HypF, it catalyzes the synthesis of the CN ligands of the active site iron of [NiFe]-hydrogenases. HypE catalyzes the ATP-dependent dehydration of the carboxamido group attached to its C-terminal cysteine to a cyano group. The cyano group is then transferred from HypE to the HypC-HypD complex or the HybG-HypD complex. The protein is Carbamoyl dehydratase HypE of Escherichia coli (strain K12).